The chain runs to 364 residues: Geranylgeranyl pyrophosphate synthase janG (364 aa).

Isopentenyl diphosphate-binding residues include Lys-83, Arg-86, and His-115. The Mg(2+) site is built by Asp-122 and Asp-126. Residue Arg-131 coordinates dimethylallyl diphosphate. Arg-132 is a binding site for isopentenyl diphosphate. Dimethylallyl diphosphate is bound by residues Lys-209, Thr-210, and Gln-243. Residue Asp-246 participates in Mg(2+) binding. Dimethylallyl diphosphate-binding residues include Asn-250, Lys-260, and Lys-270.

It belongs to the FPP/GGPP synthase family. The cofactor is Mg(2+).

The catalysed reaction is isopentenyl diphosphate + dimethylallyl diphosphate = (2E)-geranyl diphosphate + diphosphate. The enzyme catalyses isopentenyl diphosphate + (2E)-geranyl diphosphate = (2E,6E)-farnesyl diphosphate + diphosphate. It catalyses the reaction isopentenyl diphosphate + (2E,6E)-farnesyl diphosphate = (2E,6E,10E)-geranylgeranyl diphosphate + diphosphate. The protein operates within secondary metabolite biosynthesis. Functionally, geranylgeranyl pyrophosphate synthase; part of the gene cluster that mediates the biosynthesis of the indole diterpenes janthitremanes such as shearinine K or shearinine A. The geranylgeranyl diphosphate (GGPP) synthase janG catalyzes the first step in janthitremane biosynthesis via conversion of farnesyl pyrophosphate and isopentyl pyrophosphate into geranylgeranyl pyrophosphate (GGPP). Condensation of indole-3-glycerol phosphate with GGPP by the prenyl transferase janC then forms 3-geranylgeranylindole (3-GGI). Epoxidation by the FAD-dependent monooxygenase janM leads to a epoxidized-GGI that is substrate of the terpene cyclase janB for cyclization to yield paspaline. Paspaline is subsequently converted to 13-desoxypaspaline by the cytochrome P450 monooxygenase janP, via beta-PC-M6 in a series of alpha-face oxidations. The cytochrome P450 monooxygenase janQ is proposed to carry out sequential beta-face oxidation steps at C-7 and C-13 of 13-desoxypaspaline to form paspalicine and paspalinine respectively. The indole diterpene prenyltransferase janD may then convert paspalinine into shearinine K which is substrate of janO and/or additional enzymes for oxidation and cyclization to generate shearinine A. This is Geranylgeranyl pyrophosphate synthase janG from Penicillium janthinellum (Penicillium vitale).